A 547-amino-acid chain; its full sequence is Glucose-6-phosphate isomerase (547 aa).

Glutamate 351 (proton donor) is an active-site residue. Residues histidine 382 and lysine 511 contribute to the active site.

Belongs to the GPI family.

It is found in the cytoplasm. The enzyme catalyses alpha-D-glucose 6-phosphate = beta-D-fructose 6-phosphate. The protein operates within carbohydrate biosynthesis; gluconeogenesis. It functions in the pathway carbohydrate degradation; glycolysis; D-glyceraldehyde 3-phosphate and glycerone phosphate from D-glucose: step 2/4. In terms of biological role, catalyzes the reversible isomerization of glucose-6-phosphate to fructose-6-phosphate. The sequence is that of Glucose-6-phosphate isomerase from Xanthobacter autotrophicus (strain ATCC BAA-1158 / Py2).